An 80-amino-acid polypeptide reads, in one-letter code: CLAVATA3/ESR (CLE)-related protein 40 (80 aa).

The N-terminal stretch at 1 to 25 is a signal peptide; the sequence is MAAMKYKGSVFIILVILLLSSSLLA. The interval 45-80 is disordered; that stretch reads MKKEKKIDGGTANEVEERQVPTGSDPLHHKHIPFTP. Pro-65 carries the hydroxyproline modification.

The protein belongs to the CLV3/ESR signal peptide family. In terms of tissue distribution, mostly expressed at low levels in stems and apex, and, to a lower extent, in roots, seedlings, leaves, flowers, siliques and pollen.

Its subcellular location is the secreted. It is found in the extracellular space. Its function is as follows. Extracellular signal peptide secreted by differentiated root cells that regulates root cell fate. Acts with ACR4 as a ligand-receptor pair in a signal transduction pathway, coordinating movement of the root tip and organization of cell divisions in the root meristem. Promotes cell differentiation in the distal root meristem in a dose-dependent manner, especially the transition from columella stem cells (CSC) daughters into columella cells (CCs). Induces ACR4 expression in root quiescent center (QC). Involved in WUX5 QC-specific expression pattern regulation. Regulates the transition of protophloem cells from proliferation to differentiation, thus impinging on postembryonic growth capacity of the root meristem; this signaling pathway requires CRN and CLV2. In Arabidopsis thaliana (Mouse-ear cress), this protein is CLAVATA3/ESR (CLE)-related protein 40.